A 652-amino-acid polypeptide reads, in one-letter code: MRLAASIAVALPVIGAASAQGFPPPVTGVTVVKSKYDENVKITYKENDICETTEGVRSFTGHVHLPPDNDYFGVYQNYSINTFFWFFEAREDPKNAPLSIWLNGGPGSSSMIGLFQENGPCWINDDSKSTTNNSFSWNNRVNMLYIDQPNQVGFSYDELTNITYSTINDTISVADFSSGVPAQNLSTLVGTGSSQKPWATANNTVNAARSIWHFAQVWFQEFPEHKPNNNKISIWTESYGGRYGPSFASYFQEQNEKIKNHTITKEGEMHILNLDTLGVINGCIDLMFQAESYAEFPYNNTYGITAYTKEKRDAIIRDIHRPDGCFDKLAKCREAAKEGDPHFYSNNATVNAICAEANSDCDKYLMEPFQEANLGYYDIAHPLQDPFPPPFFKGFLSQSSVLSDMGSPVNFSHYSQAVGKSFHGVGDYARPDVRGFTGDIAYLLESGVKVALVYGDRDYICNWLGGEQVSLGLNYTGTEAFRKAGYADVKVNSSYVGGLVRQHGNFSFTRVFEAGHEVPGYQPETSLKIFERIMFNKDIATGELDIAQKQDYGTTGTESTFQVKNEIPPSPEPTCYLLSADGTCTPEQLNAIENGTAVVENYIIKSPAASKGNPPPTTTSSPTASPTAGSAMLKAPVAMLAISALTVLAFYL.

A signal peptide spans 1-19; the sequence is MRLAASIAVALPVIGAASA. Cys50 and Cys121 form a disulfide bridge. Residues Asn77, Asn132, Asn161, Asn168, Asn184, and Asn202 are each glycosylated (N-linked (GlcNAc...) asparagine). Ser238 is a catalytic residue. 4 N-linked (GlcNAc...) asparagine glycosylation sites follow: Asn260, Asn299, Asn347, and Asn410. 2 cysteine pairs are disulfide-bonded: Cys325–Cys361 and Cys332–Cys354. Residue Asp458 is part of the active site. Residue Cys461 coordinates substrate. N-linked (GlcNAc...) asparagine glycans are attached at residues Asn474, Asn492, and Asn505. His516 is an active-site residue. Glu517 contacts substrate. Residue Asn594 is glycosylated (N-linked (GlcNAc...) asparagine). The segment at 608-628 is disordered; the sequence is AASKGNPPPTTTSSPTASPTA. Residues 618–628 are compositionally biased toward low complexity; that stretch reads TTSSPTASPTA. Gly629 carries GPI-anchor amidated glycine lipidation. Residues 630–652 constitute a propeptide, removed in mature form; that stretch reads SAMLKAPVAMLAISALTVLAFYL.

The protein belongs to the peptidase S10 family.

The protein resides in the cell membrane. The catalysed reaction is Preferential release of a C-terminal arginine or lysine residue.. Functionally, extracellular serine carboxypeptidase that contributes to pathogenicity. This Trichophyton verrucosum (strain HKI 0517) protein is Carboxypeptidase S1 homolog A (SCPA).